The primary structure comprises 377 residues: uncharacterized protein (377 aa).

The chain crosses the membrane as a helical span at residues 21 to 43 (YFISFSALFLIAYMFVAAVPLGA).

It localises to the membrane. This is an uncharacterized protein from Treponema pallidum (strain Nichols).